We begin with the raw amino-acid sequence, 106 residues long: Protein translation factor SUI1 homolog (106 aa).

Belongs to the SUI1 family.

In Methanopyrus kandleri (strain AV19 / DSM 6324 / JCM 9639 / NBRC 100938), this protein is Protein translation factor SUI1 homolog.